We begin with the raw amino-acid sequence, 156 residues long: Protein SprT (156 aa).

One can recognise a SprT-like domain in the interval 15 to 153 (NRYFNKHFTP…CKKCKEILVL (139 aa)). Histidine 67 is a binding site for Zn(2+). Glutamate 68 is an active-site residue. Residue histidine 71 coordinates Zn(2+).

It belongs to the SprT family. The cofactor is Zn(2+).

Its subcellular location is the cytoplasm. The chain is Protein SprT from Glaesserella parasuis serovar 5 (strain SH0165) (Haemophilus parasuis).